A 179-amino-acid polypeptide reads, in one-letter code: Outer-membrane lipoprotein carrier protein (179 aa).

An N-terminal signal peptide occupies residues 1–22; the sequence is MEVLRRYVLVFTSLCMTLFAWG.

This sequence belongs to the LolA family. In terms of assembly, monomer.

Its subcellular location is the periplasm. Participates in the translocation of lipoproteins from the inner membrane to the outer membrane. Only forms a complex with a lipoprotein if the residue after the N-terminal Cys is not an aspartate (The Asp acts as a targeting signal to indicate that the lipoprotein should stay in the inner membrane). In Helicobacter hepaticus (strain ATCC 51449 / 3B1), this protein is Outer-membrane lipoprotein carrier protein.